The primary structure comprises 259 residues: MTDLKASSLRALKLMDLTTLNDDDTDEKVIALCHQAKTPVGNTAAICIYPRFIPIARKTLKEQGTPEIRIATVTNFPHGNDDIEIALAETRAAIAYGADEVDVVFPYRALMAGNEQVGFDLVKACKEACAAANVMLKVIIETGELKDEALIRKASEISIKAGADFIKTSTGKVAVNATPESARIMMEVIRDMGVEKTVGFKPAGGVRTAEDAQKYLAIADELFGADWADARHYRFGASSLLASLLKALGHGDGKSASSY.

The active-site Proton donor/acceptor is aspartate 102. Lysine 167 functions as the Schiff-base intermediate with acetaldehyde in the catalytic mechanism. The active-site Proton donor/acceptor is the lysine 201.

Belongs to the DeoC/FbaB aldolase family. DeoC type 2 subfamily.

The protein resides in the cytoplasm. The enzyme catalyses 2-deoxy-D-ribose 5-phosphate = D-glyceraldehyde 3-phosphate + acetaldehyde. It participates in carbohydrate degradation; 2-deoxy-D-ribose 1-phosphate degradation; D-glyceraldehyde 3-phosphate and acetaldehyde from 2-deoxy-alpha-D-ribose 1-phosphate: step 2/2. Catalyzes a reversible aldol reaction between acetaldehyde and D-glyceraldehyde 3-phosphate to generate 2-deoxy-D-ribose 5-phosphate. The polypeptide is Deoxyribose-phosphate aldolase (Escherichia coli O8 (strain IAI1)).